Reading from the N-terminus, the 200-residue chain is Holliday junction branch migration complex subunit RuvA (200 aa).

The tract at residues 1 to 64 is domain I; sequence MIGHLRGIIV…EDAHTLYGFH (64 aa). A domain II region spans residues 65–143; that stretch reads NDHERRLFRA…RWHTNDTPSP (79 aa). The tract at residues 144-148 is flexible linker; it reads EGLRS. Residues 149-200 form a domain III region; that stretch reads SNTQPTQDAISALMALGYKPQEAKRAIDAIQKPDLSAETLIRLALKQMVLGT.

It belongs to the RuvA family. Homotetramer. Forms an RuvA(8)-RuvB(12)-Holliday junction (HJ) complex. HJ DNA is sandwiched between 2 RuvA tetramers; dsDNA enters through RuvA and exits via RuvB. An RuvB hexamer assembles on each DNA strand where it exits the tetramer. Each RuvB hexamer is contacted by two RuvA subunits (via domain III) on 2 adjacent RuvB subunits; this complex drives branch migration. In the full resolvosome a probable DNA-RuvA(4)-RuvB(12)-RuvC(2) complex forms which resolves the HJ.

The protein localises to the cytoplasm. In terms of biological role, the RuvA-RuvB-RuvC complex processes Holliday junction (HJ) DNA during genetic recombination and DNA repair, while the RuvA-RuvB complex plays an important role in the rescue of blocked DNA replication forks via replication fork reversal (RFR). RuvA specifically binds to HJ cruciform DNA, conferring on it an open structure. The RuvB hexamer acts as an ATP-dependent pump, pulling dsDNA into and through the RuvAB complex. HJ branch migration allows RuvC to scan DNA until it finds its consensus sequence, where it cleaves and resolves the cruciform DNA. The chain is Holliday junction branch migration complex subunit RuvA from Coxiella burnetii (strain CbuG_Q212) (Coxiella burnetii (strain Q212)).